The chain runs to 261 residues: Protein FAM78B (261 aa).

It belongs to the FAM78 family.

The chain is Protein FAM78B (FAM78B) from Homo sapiens (Human).